Here is a 145-residue protein sequence, read N- to C-terminus: D-aminoacyl-tRNA deacylase (145 aa).

A Gly-cisPro motif, important for rejection of L-amino acids motif is present at residues 137–138 (GP).

Belongs to the DTD family. Homodimer.

It localises to the cytoplasm. It carries out the reaction glycyl-tRNA(Ala) + H2O = tRNA(Ala) + glycine + H(+). The catalysed reaction is a D-aminoacyl-tRNA + H2O = a tRNA + a D-alpha-amino acid + H(+). An aminoacyl-tRNA editing enzyme that deacylates mischarged D-aminoacyl-tRNAs. Also deacylates mischarged glycyl-tRNA(Ala), protecting cells against glycine mischarging by AlaRS. Acts via tRNA-based rather than protein-based catalysis; rejects L-amino acids rather than detecting D-amino acids in the active site. By recycling D-aminoacyl-tRNA to D-amino acids and free tRNA molecules, this enzyme counteracts the toxicity associated with the formation of D-aminoacyl-tRNA entities in vivo and helps enforce protein L-homochirality. In Salmonella typhi, this protein is D-aminoacyl-tRNA deacylase.